We begin with the raw amino-acid sequence, 445 residues long: Phosphoglucosamine mutase (445 aa).

The active-site Phosphoserine intermediate is S99. Residues S99, D242, D244, and D246 each contribute to the Mg(2+) site. Position 99 is a phosphoserine (S99).

This sequence belongs to the phosphohexose mutase family. It depends on Mg(2+) as a cofactor. Post-translationally, activated by phosphorylation.

The enzyme catalyses alpha-D-glucosamine 1-phosphate = D-glucosamine 6-phosphate. Catalyzes the conversion of glucosamine-6-phosphate to glucosamine-1-phosphate. This is Phosphoglucosamine mutase from Helicobacter pylori (strain HPAG1).